Reading from the N-terminus, the 218-residue chain is Glutathione S-transferase class-mu 26 kDa isozyme 51 (218 aa).

Residues 2–83 (PAKLGYWKIR…YIADKHGMLG (82 aa)) enclose the GST N-terminal domain. Residues 7-8 (YW), 41-45 (WFGDK), 54-55 (NL), and 67-68 (QS) each bind glutathione. A GST C-terminal domain is found at 85–203 (TPEERARISM…ESEKFIKWPL (119 aa)). Substrate is bound at residue Tyr-111.

It belongs to the GST superfamily. Mu family. As to quaternary structure, homodimer.

The protein localises to the cytoplasm. The enzyme catalyses RX + glutathione = an S-substituted glutathione + a halide anion + H(+). Conjugation of reduced glutathione to a wide number of exogenous and endogenous hydrophobic electrophiles. Its function is as follows. GST isoenzymes appear to play a central role in the parasite detoxification system. Other functions are also suspected including a role in increasing the solubility of haematin in the parasite gut. The sequence is that of Glutathione S-transferase class-mu 26 kDa isozyme 51 from Fasciola hepatica (Liver fluke).